The chain runs to 116 residues: NADH-quinone oxidoreductase subunit A (116 aa).

Transmembrane regions (helical) follow at residues 3 to 23, 61 to 81, and 85 to 105; these read FTLL…ALGI, FAIL…WAVV, and LGVY…LGLA.

It belongs to the complex I subunit 3 family. As to quaternary structure, NDH-1 is composed of 14 different subunits. Subunits NuoA, H, J, K, L, M, N constitute the membrane sector of the complex.

It is found in the cell inner membrane. It carries out the reaction a quinone + NADH + 5 H(+)(in) = a quinol + NAD(+) + 4 H(+)(out). In terms of biological role, NDH-1 shuttles electrons from NADH, via FMN and iron-sulfur (Fe-S) centers, to quinones in the respiratory chain. The immediate electron acceptor for the enzyme in this species is believed to be a menaquinone. Couples the redox reaction to proton translocation (for every two electrons transferred, four hydrogen ions are translocated across the cytoplasmic membrane), and thus conserves the redox energy in a proton gradient. The polypeptide is NADH-quinone oxidoreductase subunit A (Phocaeicola vulgatus (strain ATCC 8482 / DSM 1447 / JCM 5826 / CCUG 4940 / NBRC 14291 / NCTC 11154) (Bacteroides vulgatus)).